The primary structure comprises 258 residues: Cytochrome c oxidase subunit 2 (258 aa).

Residues 1-41 (MIVNECLFFTIALCDAAEPWQLGFQDAATPMMQGIIDLHHD) are Mitochondrial intermembrane-facing. The helical transmembrane segment at 42-58 (ILFFLILILVFVLWILV) threads the bilayer. Over 59 to 82 (RALWHFYYKKNPIPQRIVHGTTIE) the chain is Mitochondrial matrix. The chain crosses the membrane as a helical span at residues 83–104 (ILWTIFPSIILMFIAIPSFALL). At 105–258 (YSMDEVVVDP…VSNLFIPPTS (154 aa)) the chain is on the mitochondrial intermembrane side. Cu cation-binding residues include histidine 187, cysteine 222, glutamate 224, cysteine 226, histidine 230, and methionine 233. Residue glutamate 224 coordinates Mg(2+).

Belongs to the cytochrome c oxidase subunit 2 family. In terms of assembly, component of the cytochrome c oxidase (complex IV, CIV), a multisubunit enzyme composed of a catalytic core of 3 subunits and several supernumerary subunits. The complex exists as a monomer or a dimer and forms supercomplexes (SCs) in the inner mitochondrial membrane with ubiquinol-cytochrome c oxidoreductase (cytochrome b-c1 complex, complex III, CIII). The cofactor is Cu cation.

Its subcellular location is the mitochondrion inner membrane. It carries out the reaction 4 Fe(II)-[cytochrome c] + O2 + 8 H(+)(in) = 4 Fe(III)-[cytochrome c] + 2 H2O + 4 H(+)(out). Its function is as follows. Component of the cytochrome c oxidase, the last enzyme in the mitochondrial electron transport chain which drives oxidative phosphorylation. The respiratory chain contains 3 multisubunit complexes succinate dehydrogenase (complex II, CII), ubiquinol-cytochrome c oxidoreductase (cytochrome b-c1 complex, complex III, CIII) and cytochrome c oxidase (complex IV, CIV), that cooperate to transfer electrons derived from NADH and succinate to molecular oxygen, creating an electrochemical gradient over the inner membrane that drives transmembrane transport and the ATP synthase. Cytochrome c oxidase is the component of the respiratory chain that catalyzes the reduction of oxygen to water. Electrons originating from reduced cytochrome c in the intermembrane space (IMS) are transferred via the dinuclear copper A center (CU(A)) of subunit 2 and heme A of subunit 1 to the active site in subunit 1, a binuclear center (BNC) formed by heme A3 and copper B (CU(B)). The BNC reduces molecular oxygen to 2 water molecules using 4 electrons from cytochrome c in the IMS and 4 protons from the mitochondrial matrix. This is Cytochrome c oxidase subunit 2 (COX2) from Oenothera berteroana (Bertero's evening primrose).